Here is a 107-residue protein sequence, read N- to C-terminus: Histone H4 (107 aa).

Residues 1–16 are compositionally biased toward gly residues; that stretch reads MPGRGKGGKGGKGYGK. The disordered stretch occupies residues 1 to 23; sequence MPGRGKGGKGGKGYGKVGAKRHA. The DNA-binding element occupies 17–21; sequence VGAKR.

This sequence belongs to the histone H4 family. The nucleosome is a histone octamer containing two molecules each of H2A, H2B, H3 and H4 assembled in one H3-H4 heterotetramer and two H2A-H2B heterodimers. The octamer wraps approximately 147 bp of DNA.

Its subcellular location is the nucleus. The protein resides in the chromosome. Functionally, core component of nucleosome. Nucleosomes wrap and compact DNA into chromatin, limiting DNA accessibility to the cellular machineries which require DNA as a template. Histones thereby play a central role in transcription regulation, DNA repair, DNA replication and chromosomal stability. DNA accessibility is regulated via a complex set of post-translational modifications of histones, also called histone code, and nucleosome remodeling. This chain is Histone H4, found in Euplotes crassus.